A 366-amino-acid polypeptide reads, in one-letter code: Ferrochelatase (366 aa).

Residues H210 and E293 each coordinate Fe cation.

This sequence belongs to the ferrochelatase family.

The protein resides in the cytoplasm. The catalysed reaction is heme b + 2 H(+) = protoporphyrin IX + Fe(2+). It participates in porphyrin-containing compound metabolism; protoheme biosynthesis; protoheme from protoporphyrin-IX: step 1/1. In terms of biological role, catalyzes the ferrous insertion into protoporphyrin IX. This Leptospira borgpetersenii serovar Hardjo-bovis (strain JB197) protein is Ferrochelatase.